A 116-amino-acid chain; its full sequence is Aspartate 1-decarboxylase (116 aa).

Residue Ser-25 is the Schiff-base intermediate with substrate; via pyruvic acid of the active site. Ser-25 is subject to Pyruvic acid (Ser). Residue Thr-57 coordinates substrate. Tyr-58 acts as the Proton donor in catalysis. A substrate-binding site is contributed by 72 to 74; the sequence is GAA.

This sequence belongs to the PanD family. In terms of assembly, heterooctamer of four alpha and four beta subunits. Pyruvate is required as a cofactor. Is synthesized initially as an inactive proenzyme, which is activated by self-cleavage at a specific serine bond to produce a beta-subunit with a hydroxyl group at its C-terminus and an alpha-subunit with a pyruvoyl group at its N-terminus.

The protein resides in the cytoplasm. The enzyme catalyses L-aspartate + H(+) = beta-alanine + CO2. It participates in cofactor biosynthesis; (R)-pantothenate biosynthesis; beta-alanine from L-aspartate: step 1/1. Catalyzes the pyruvoyl-dependent decarboxylation of aspartate to produce beta-alanine. The sequence is that of Aspartate 1-decarboxylase from Helicobacter acinonychis (strain Sheeba).